Consider the following 111-residue polypeptide: Nucleoid-associated protein NMCC_1355 (111 aa).

Belongs to the YbaB/EbfC family. Homodimer.

The protein localises to the cytoplasm. It is found in the nucleoid. In terms of biological role, binds to DNA and alters its conformation. May be involved in regulation of gene expression, nucleoid organization and DNA protection. This is Nucleoid-associated protein NMCC_1355 from Neisseria meningitidis serogroup C (strain 053442).